Here is a 160-residue protein sequence, read N- to C-terminus: M-phase phosphoprotein 6 (160 aa).

Glycyl lysine isopeptide (Lys-Gly) (interchain with G-Cter in SUMO2) cross-links involve residues Lys37 and Lys86. Ser110 carries the post-translational modification Phosphoserine. The short motif at 116-133 is the Nuclear localization signal element; the sequence is RRYETLVGTIGKKFARKR. Residue Lys127 forms a Glycyl lysine isopeptide (Lys-Gly) (interchain with G-Cter in SUMO2) linkage. A Phosphothreonine modification is found at Thr147. Glycyl lysine isopeptide (Lys-Gly) (interchain with G-Cter in SUMO2) cross-links involve residues Lys150 and Lys153.

It belongs to the MPP6 family. Associates with the RNA exosome complex, mediated by EXOSC3. Interacts with ARHGAP18. Interacts with exosome cofactors EXOSC10 and MTREX. In terms of processing, phosphorylated in M (mitotic) phase.

Its subcellular location is the nucleus. The protein localises to the nucleolus. It is found in the cytoplasm. In terms of biological role, RNA-binding protein that associates with the RNA exosome complex. Involved in the 3'-processing of the 7S pre-RNA to the mature 5.8S rRNA and play a role in recruiting the RNA exosome complex to pre-rRNA; this function may include C1D. The sequence is that of M-phase phosphoprotein 6 from Homo sapiens (Human).